Consider the following 114-residue polypeptide: Flagellar transcriptional regulator FlhD (114 aa).

The protein belongs to the FlhD family. As to quaternary structure, homodimer; disulfide-linked. Forms a heterohexamer composed of two FlhC and four FlhD subunits. Each FlhC binds a FlhD dimer, forming a heterotrimer, and a hexamer assembles by dimerization of two heterotrimers.

It localises to the cytoplasm. In terms of biological role, functions in complex with FlhC as a master transcriptional regulator that regulates transcription of several flagellar and non-flagellar operons by binding to their promoter region. Activates expression of class 2 flagellar genes, including fliA, which is a flagellum-specific sigma factor that turns on the class 3 genes. Also regulates genes whose products function in a variety of physiological pathways. This is Flagellar transcriptional regulator FlhD from Wigglesworthia glossinidia brevipalpis.